The following is a 704-amino-acid chain: Ion-translocating oxidoreductase complex subunit C (704 aa).

2 consecutive 4Fe-4S ferredoxin-type domains span residues methionine 368 to tyrosine 397 and lysine 407 to phenylalanine 436. [4Fe-4S] cluster-binding residues include cysteine 377, cysteine 380, cysteine 383, cysteine 387, cysteine 416, cysteine 419, cysteine 422, and cysteine 426. The interval alanine 535–alanine 684 is disordered. Low complexity predominate over residues lysine 556 to arginine 565.

Belongs to the 4Fe4S bacterial-type ferredoxin family. RnfC subfamily. The complex is composed of six subunits: RsxA, RsxB, RsxC, RsxD, RsxE and RsxG. [4Fe-4S] cluster is required as a cofactor.

It is found in the cell inner membrane. Its function is as follows. Part of a membrane-bound complex that couples electron transfer with translocation of ions across the membrane. Required to maintain the reduced state of SoxR. The sequence is that of Ion-translocating oxidoreductase complex subunit C from Salmonella paratyphi C (strain RKS4594).